A 468-amino-acid polypeptide reads, in one-letter code: UDP-N-acetylmuramate--L-alanine ligase (468 aa).

An ATP-binding site is contributed by 112 to 118 (GMHGKTT).

The protein belongs to the MurCDEF family.

It is found in the cytoplasm. The catalysed reaction is UDP-N-acetyl-alpha-D-muramate + L-alanine + ATP = UDP-N-acetyl-alpha-D-muramoyl-L-alanine + ADP + phosphate + H(+). It functions in the pathway cell wall biogenesis; peptidoglycan biosynthesis. Cell wall formation. The polypeptide is UDP-N-acetylmuramate--L-alanine ligase (Koribacter versatilis (strain Ellin345)).